The following is a 533-amino-acid chain: Glucose-6-phosphate isomerase (533 aa).

E341 acts as the Proton donor in catalysis. Catalysis depends on residues H372 and K501.

Belongs to the GPI family.

It is found in the cytoplasm. The catalysed reaction is alpha-D-glucose 6-phosphate = beta-D-fructose 6-phosphate. The protein operates within carbohydrate biosynthesis; gluconeogenesis. It functions in the pathway carbohydrate degradation; glycolysis; D-glyceraldehyde 3-phosphate and glycerone phosphate from D-glucose: step 2/4. Its function is as follows. Catalyzes the reversible isomerization of glucose-6-phosphate to fructose-6-phosphate. The chain is Glucose-6-phosphate isomerase from Cereibacter sphaeroides (strain ATCC 17029 / ATH 2.4.9) (Rhodobacter sphaeroides).